Consider the following 130-residue polypeptide: Small ribosomal subunit protein uS9 (130 aa).

It belongs to the universal ribosomal protein uS9 family.

The protein is Small ribosomal subunit protein uS9 of Aeromonas salmonicida (strain A449).